The chain runs to 226 residues: MTLLILLRHGQSVWNQKNLFTGWVDIPLSQQGIQEAIAAGESIKHLPIDCIFTSTLVRSLMTALLAMTNHSSQKVPYIVHEERPDMSRIHSQKEMEQMIPLFQSSALNERMYGELQGKNKQEVAAQFGEEQVKLWRRSYRIAPPQGESLFDTGQRTLPYFQERIFPLLQQGKNIFISAHGNSLRSLIMDLEKLSEEQVLSLELPTGQPIVYEWTGQKFTKHAPSLG.

Substrate contacts are provided by residues 8–15 (RHGQSVWN), 21–22 (TG), Arg-58, 109–112 (ERMY), Lys-120, 136–137 (RR), and 180–181 (GN). Residue His-9 is the Tele-phosphohistidine intermediate of the active site. Glu-109 acts as the Proton donor/acceptor in catalysis.

It belongs to the phosphoglycerate mutase family. BPG-dependent PGAM subfamily.

It catalyses the reaction (2R)-2-phosphoglycerate = (2R)-3-phosphoglycerate. It participates in carbohydrate degradation; glycolysis; pyruvate from D-glyceraldehyde 3-phosphate: step 3/5. In terms of biological role, catalyzes the interconversion of 2-phosphoglycerate and 3-phosphoglycerate. In Chlamydia trachomatis serovar L2b (strain UCH-1/proctitis), this protein is 2,3-bisphosphoglycerate-dependent phosphoglycerate mutase.